The chain runs to 492 residues: Dipeptide permease D (492 aa).

Helical transmembrane passes span 14–34 (VVALQIWEYFSFYGMRALLIL), 49–69 (ALFSAYCSLVYVTPILGGYLA), 91–111 (LVLGASETAPVFLYLSLAIIV), 138–158 (GGFSLMYAAGNIGSIIAPIAC), 167–187 (WAMGFALAAIGMVAGLVIFLC), 212–232 (NWGWLLVLLVTAPLLIAVLFW), 236–256 (SVYALIVATVIGLAVLARIYL), 269–289 (LIVVLTAFSLLFWAFAQQGGS), 312–332 (MFQSVNAFAVMLCGMVLAWLV), 344–364 (IWGKFALGLGLMSAGFCILTL), 379–399 (LMVLGLAVMGFAELFIDPVAM), 413–433 (VLTGIYMLLSGAIANYLAGVI), and 458–478 (VFSQITWGALACVGVVLVIWL).

Belongs to the major facilitator superfamily. Proton-dependent oligopeptide transporter (POT/PTR) (TC 2.A.17) family. DtpD subfamily.

The protein resides in the cell inner membrane. Functionally, probable proton-dependent permease that transports dipeptides. The polypeptide is Dipeptide permease D (Klebsiella pneumoniae (strain 342)).